The primary structure comprises 622 residues: Polypeptide N-acetylgalactosaminyltransferase 18 (622 aa).

Over 1-12 the chain is Cytoplasmic; that stretch reads MVCTRKTKTLVS. The chain crosses the membrane as a helical; Signal-anchor for type II membrane protein span at residues 13-35; it reads TCVILSGMTNIICLLYVGWVTNY. The Lumenal portion of the chain corresponds to 36–622; the sequence is IASVYVRGQE…ITNVLRSLVS (587 aa). Disulfide bonds link Cys144-Cys392, Cys383-Cys462, Cys497-Cys513, Cys545-Cys558, and Cys586-Cys606. N-linked (GlcNAc...) asparagine glycosylation occurs at Asn146. Positions 153–267 are catalytic subdomain A; that stretch reads LPEVSIVFIF…VGWAEPVLTR (115 aa). Residue Asp194 participates in substrate binding. Asn195 carries N-linked (GlcNAc...) asparagine glycosylation. Mn(2+)-binding residues include Asp251 and His253. The N-linked (GlcNAc...) asparagine glycan is linked to Asn320. Residues 324-400 form a catalytic subdomain B region; that stretch reads PIRSPALIGC…PCSRIAHIER (77 aa). His397 provides a ligand contact to Mn(2+). The substrate site is built by Arg400 and Tyr405. Residues 484 to 614 enclose the Ricin B-type lectin domain; sequence AYGVLQNSLK…KCSGQHWTIT (131 aa).

It belongs to the glycosyltransferase 2 family. GalNAc-T subfamily. It depends on Mn(2+) as a cofactor.

The protein localises to the golgi apparatus membrane. It catalyses the reaction L-seryl-[protein] + UDP-N-acetyl-alpha-D-galactosamine = a 3-O-[N-acetyl-alpha-D-galactosaminyl]-L-seryl-[protein] + UDP + H(+). The enzyme catalyses L-threonyl-[protein] + UDP-N-acetyl-alpha-D-galactosamine = a 3-O-[N-acetyl-alpha-D-galactosaminyl]-L-threonyl-[protein] + UDP + H(+). Its pathway is protein modification; protein glycosylation. Functionally, catalyzes the initial reaction in O-linked oligosaccharide biosynthesis, the transfer of an N-acetyl-D-galactosamine (GalNAc) residue from UDP-GalNAc to a serine or threonine residue on the protein receptor. In Mus musculus (Mouse), this protein is Polypeptide N-acetylgalactosaminyltransferase 18 (Galnt18).